The primary structure comprises 449 residues: Glycine receptor subunit alpha-2 (449 aa).

An N-terminal signal peptide occupies residues 1-27; the sequence is MTRPSVKLLTTLLACLMEMLNFRVSSG. Residues 28–255 lie on the Extracellular side of the membrane; that stretch reads KDPDLLSSSS…FHLERQMGYY (228 aa). Residue Asn70 is glycosylated (N-linked (GlcNAc...) asparagine). Glycine-binding residues include Arg97 and Ser161. Position 97 (Arg97) interacts with strychnine. The cysteines at positions 170 and 184 are disulfide-linked. Glu224 and Asp226 together coordinate Zn(2+). A disulfide bridge links Cys230 with Cys241. Thr236 is a binding site for glycine. His247 contacts Zn(2+). The helical transmembrane segment at 256 to 276 threads the bilayer; that stretch reads LIQMYIPSLLIVILSWVSFWI. Over 277-282 the chain is Cytoplasmic; the sequence is NMDAAP. The helical transmembrane segment at 283–302 threads the bilayer; sequence ARVALGITTVLTMTTQSSGS. Topologically, residues 303-313 are extracellular; sequence RASLPKVSYVK. Residues 314 to 334 form a helical membrane-spanning segment; the sequence is AIDIWMAVCLLFVFAALLEYA. Residues 335 to 420 lie on the Cytoplasmic side of the membrane; that stretch reads GVNFVSRQQK…RAKRIDTISR (86 aa). A helical transmembrane segment spans residues 421 to 441; sequence AAFPLAFLIFNVFYWITYKII. Topologically, residues 442–449 are extracellular; it reads RHESARKD.

This sequence belongs to the ligand-gated ion channel (TC 1.A.9) family.

Its subcellular location is the postsynaptic cell membrane. The protein localises to the synapse. It localises to the cell membrane. It is found in the cell projection. It carries out the reaction chloride(in) = chloride(out). With respect to regulation, channel opening is triggered by extracellular glycine. Channel opening is also triggered by taurine and beta-alanine. Inhibited by strychnine. In terms of biological role, subunit of heteromeric glycine-gated chloride channels. Plays a role in synaptic plasticity. Contributes to the generation of inhibitory postsynaptic currents, and is involved in the down-regulation of neuronal excitability. The sequence is that of Glycine receptor subunit alpha-2 (glra2) from Danio rerio (Zebrafish).